Reading from the N-terminus, the 147-residue chain is Lysozyme C (147 aa).

The signal sequence occupies residues Met-1 to Gly-18. The region spanning Lys-19–Leu-147 is the C-type lysozyme domain. Cystine bridges form between Cys-24–Cys-145, Cys-48–Cys-133, Cys-82–Cys-98, and Cys-94–Cys-112.

It belongs to the glycosyl hydrolase 22 family. Monomer.

It localises to the secreted. It catalyses the reaction Hydrolysis of (1-&gt;4)-beta-linkages between N-acetylmuramic acid and N-acetyl-D-glucosamine residues in a peptidoglycan and between N-acetyl-D-glucosamine residues in chitodextrins.. Lysozymes have primarily a bacteriolytic function; those in tissues and body fluids are associated with the monocyte-macrophage system and enhance the activity of immunoagents. The chain is Lysozyme C (LYZ) from Meleagris gallopavo (Wild turkey).